The following is a 316-amino-acid chain: LIM/homeobox protein lim-6 (316 aa).

2 consecutive LIM zinc-binding domains span residues 40 to 101 (KLCS…LYGK) and 102 to 163 (RCRR…ICNF). Positions 186–245 (PKRPRTILNAQQRRQFKTAFERSSKPSRKVREQLANETGLSVRVVQVWFQNQRAKIKKLN) form a DNA-binding region, homeobox. Residues 244-297 (LNKKDSDSGDTFKHGPGSEGRSTEDIRSSDDEEESVINLDADEVETSETSSYTD) are disordered. A compositionally biased stretch (basic and acidic residues) spans 246 to 256 (KKDSDSGDTFK). Over residues 273 to 289 (DDEEESVINLDADEVET) the composition is skewed to acidic residues.

It is found in the nucleus. In terms of biological role, transcription factor. Required for the terminal differentiation of sensory- and motor-neurons, especially GABAergic neurons, and for morphological aspects of uterine development. Plays a role in the cell-type-specific regulation of glutamic acid decarboxylase unc-25. Involved in promoting sleep-like behavioral quiescence, acting by modulating expression of transcription factor aptf-1 in the single sleep-active ring interneuron RIS. Plays a role in regulation of RIS differentiation. Required for the functional asymmetry of the ASER and ASEL chemosensory neuron pair, conferring the ability to discriminate sodium from chloride, perhaps by modulating expression of receptor-type guanylate cyclases, such as gcy-5. Involved in regulating postembryonic axon maintenance in the ventral nerve cord, acting in concert with LIM homeobox protein ceh-14, via modulation of expression of immunoglobulin domain zig genes in the interneuron PVT. May play a role in the functions of the excretory gland cell. The protein is LIM/homeobox protein lim-6 of Caenorhabditis elegans.